The sequence spans 689 residues: Glycine--tRNA ligase beta subunit (689 aa).

Belongs to the class-II aminoacyl-tRNA synthetase family. In terms of assembly, tetramer of two alpha and two beta subunits.

The protein localises to the cytoplasm. The catalysed reaction is tRNA(Gly) + glycine + ATP = glycyl-tRNA(Gly) + AMP + diphosphate. The sequence is that of Glycine--tRNA ligase beta subunit from Shewanella baltica (strain OS223).